A 380-amino-acid chain; its full sequence is Chaperone protein DnaJ (380 aa).

Positions 5–70 (DYYEILGVTK…QKRAAYDRFG (66 aa)) constitute a J domain. The CR-type zinc-finger motif lies at 137 to 215 (GKAETIKIPT…CQGAGRVNRE (79 aa)). Zn(2+) contacts are provided by C150, C153, C167, C170, C189, C192, C203, and C206. CXXCXGXG motif repeat units lie at residues 150–157 (CEVCDGSG), 167–174 (CPTCAGYG), 189–196 (CPNCHGRG), and 203–210 (CTACQGAG).

The protein belongs to the DnaJ family. In terms of assembly, homodimer. The cofactor is Zn(2+).

Its subcellular location is the cytoplasm. Functionally, participates actively in the response to hyperosmotic and heat shock by preventing the aggregation of stress-denatured proteins and by disaggregating proteins, also in an autonomous, DnaK-independent fashion. Unfolded proteins bind initially to DnaJ; upon interaction with the DnaJ-bound protein, DnaK hydrolyzes its bound ATP, resulting in the formation of a stable complex. GrpE releases ADP from DnaK; ATP binding to DnaK triggers the release of the substrate protein, thus completing the reaction cycle. Several rounds of ATP-dependent interactions between DnaJ, DnaK and GrpE are required for fully efficient folding. Also involved, together with DnaK and GrpE, in the DNA replication of plasmids through activation of initiation proteins. This is Chaperone protein DnaJ from Methylobacterium radiotolerans (strain ATCC 27329 / DSM 1819 / JCM 2831 / NBRC 15690 / NCIMB 10815 / 0-1).